The following is a 302-amino-acid chain: Ethylmalonyl-CoA decarboxylase (302 aa).

The protein belongs to the enoyl-CoA hydratase/isomerase family.

It is found in the cytoplasm. Its subcellular location is the cytosol. It catalyses the reaction (2S)-ethylmalonyl-CoA + H(+) = butanoyl-CoA + CO2. The catalysed reaction is (S)-methylmalonyl-CoA + H(+) = propanoyl-CoA + CO2. The enzyme catalyses (2R)-ethylmalonyl-CoA + H(+) = butanoyl-CoA + CO2. Functionally, decarboxylates ethylmalonyl-CoA, a potentially toxic metabolite, to form butyryl-CoA, suggesting it might be involved in metabolite proofreading. Acts preferentially on (S)-ethylmalonyl-CoA but also has some activity on the (R)-isomer. Also has methylmalonyl-CoA decarboxylase activity at lower level. The polypeptide is Ethylmalonyl-CoA decarboxylase (echdc1) (Danio rerio (Zebrafish)).